A 429-amino-acid chain; its full sequence is Adenylosuccinate synthetase (429 aa).

Residues 12–18 (GDEGKGK) and 40–42 (GHT) each bind GTP. Aspartate 13 serves as the catalytic Proton acceptor. The Mg(2+) site is built by aspartate 13 and glycine 40. IMP contacts are provided by residues 13-16 (DEGK), 38-41 (NAGH), threonine 129, arginine 143, glutamine 224, threonine 239, and arginine 303. The active-site Proton donor is the histidine 41. Position 299–305 (299–305 (VTTGRAR)) interacts with substrate. GTP contacts are provided by residues arginine 305, 331–333 (KLD), and 413–415 (GVG).

It belongs to the adenylosuccinate synthetase family. As to quaternary structure, homodimer. Mg(2+) is required as a cofactor.

Its subcellular location is the cytoplasm. It catalyses the reaction IMP + L-aspartate + GTP = N(6)-(1,2-dicarboxyethyl)-AMP + GDP + phosphate + 2 H(+). It participates in purine metabolism; AMP biosynthesis via de novo pathway; AMP from IMP: step 1/2. Plays an important role in the de novo pathway of purine nucleotide biosynthesis. Catalyzes the first committed step in the biosynthesis of AMP from IMP. The chain is Adenylosuccinate synthetase from Rhodococcus opacus (strain B4).